The sequence spans 164 residues: MAFKDNAVELEERVVAINRVTKVVKGGRNMRFAALVVVGDRNGRVGFGTGKSQEVPEAIRKAVEAAKKNLIEVPMVGTTIPHEVRSEFGGAKVLLKPAVEGAGVAAGGAVRAVVELAGVADVTSKSLGSNTPINIVRATVEGLKQLKRAEEVAALRGISVSDLA.

The region spanning 10–73 is the S5 DRBM domain; that stretch reads LEERVVAINR…EAAKKNLIEV (64 aa).

It belongs to the universal ribosomal protein uS5 family. In terms of assembly, part of the 30S ribosomal subunit. Contacts proteins S4 and S8.

With S4 and S12 plays an important role in translational accuracy. In terms of biological role, located at the back of the 30S subunit body where it stabilizes the conformation of the head with respect to the body. The polypeptide is Small ribosomal subunit protein uS5 (Streptococcus thermophilus (strain CNRZ 1066)).